The chain runs to 554 residues: Zinc finger protein 426 (554 aa).

One can recognise a KRAB domain in the interval 42 to 112 (VTFDDVAVDF…QGGVLQGWEM (71 aa)). The C2H2-type 1; atypical zinc finger occupies 146-174 (CDCEQCGEVFSEHSCLKTHVRTQSTGNTH). C2H2-type zinc fingers lie at residues 224–246 (FECSHCGKSFINESYLQAHMRTH), 280–302 (YKCKECGKGYRYPAYLSIHMRTH), 308–330 (YECKECGKAFNYSNSFQIHGRTH), 336–358 (YVCKECGKAFTQYSGLSMHVRSH), 364–386 (YECKECGKSFLTSSRLIQHIRTH), 392–414 (FVCVECGKAFAVSSNLSGHLRTH), 420–442 (CECKICGKVFGYPSCLNNHMRTH), 448–470 (YTCKECGKAFNYSTHLKIHMRIH), 476–498 (YECKQCGKAFSHSSSFQIHERTH), 504–526 (YECKECGKAFTCSSSFRIHEKTH), and 532–554 (YKCQQCGKAYSHPRSLRRHEQIH).

The protein resides in the nucleus. In terms of biological role, may be involved in transcriptional regulation. This Homo sapiens (Human) protein is Zinc finger protein 426 (ZNF426).